Reading from the N-terminus, the 244-residue chain is Extracellular superoxide dismutase [Cu-Zn] (244 aa).

An N-terminal signal peptide occupies residues 1-15 (MVAFLFCNLLLVACG). 2 disulfide bridges follow: C70/C215 and C132/C214. The N-linked (GlcNAc...) asparagine glycan is linked to N114. Cu cation is bound by residues H121, H123, and H138. 4 residues coordinate Zn(2+): H138, H146, H149, and D152. H188 contacts Cu cation. The disordered stretch occupies residues 224-244 (AWESQTKERKKRRRESECKTT).

This sequence belongs to the Cu-Zn superoxide dismutase family. Homodimer. Interacts with ATP7A; this interaction is copper-dependent and is required for SOD3 activity. Requires Cu cation as cofactor. Zn(2+) is required as a cofactor.

It localises to the secreted. The protein localises to the extracellular space. Its subcellular location is the golgi apparatus. It is found in the trans-Golgi network. The enzyme catalyses 2 superoxide + 2 H(+) = H2O2 + O2. In terms of biological role, protect the extracellular space from toxic effect of reactive oxygen intermediates by converting superoxide radicals into hydrogen peroxide and oxygen. This is Extracellular superoxide dismutase [Cu-Zn] (Sod3) from Rattus norvegicus (Rat).